We begin with the raw amino-acid sequence, 506 residues long: Sodium transporter HKT1 (506 aa).

The Cytoplasmic segment spans residues 1–19; it reads MDRVVAKIAKIRSQLTKLR. The chain crosses the membrane as a helical span at residues 20-40; sequence SLFFLYFIYFLFFSFLGFLAL. Residues 41-81 are Extracellular-facing; sequence KITKPRTTSRPHDFDLFFTSVSAITVSSMSTVDMEVFSNTQ. Residues 82 to 102 traverse the membrane as a helical segment; that stretch reads LIFLTILMFLGGEIFTSFLNL. Over 103–159 the chain is Cytoplasmic; that stretch reads YVSYFTKFVFPHNKIRHILGSYNSDSSIEDRCDVETVTDYREGLIKIDERASKCLYS. Residues 160–180 traverse the membrane as a helical segment; it reads VVLSYHLVTNLVGSVLLLVYV. At 181–232 the chain is on the extracellular side; it reads NFVKTARDVLSSKEISPLTFSVFTTVSTFANCGFVPTNENMIIFRKNSGLIW. The chain crosses the membrane as a helical span at residues 233-253; it reads LLIPQVLMGNTLFPCFLVLLI. At 254 to 286 the chain is on the cytoplasmic side; the sequence is WGLYKITKRDEYGYILKNHNKMGYSHLLSVRLC. The helical transmembrane segment at 287-307 threads the bilayer; that stretch reads VLLGVTVLGFLIIQLLFFCAF. At 308–348 the chain is on the extracellular side; the sequence is EWTSESLEGMSSYEKLVGSLFQVVNSRHTGETIVDLSTLSP. Residues 349–369 traverse the membrane as a helical segment; sequence AILVLFILMMYLPPYTLFMPL. Residues 370 to 392 are Cytoplasmic-facing; the sequence is TEQKTIEKEGGDDDSENGKKVKK. A helical membrane pass occupies residues 393-413; it reads SGLIVSQLSFLTICIFLISIT. The Extracellular segment spans residues 414–465; the sequence is ERQNLQRDPINFNVLNITLEVISAYGNVGFTTGYSCERRVDISDGGCKDASY. An N-linked (GlcNAc...) asparagine glycan is attached at asparagine 429. A helical transmembrane segment spans residues 466-486; sequence GFAGRWSPMGKFVLIIVMFYG. The Cytoplasmic segment spans residues 487 to 506; it reads RFKQFTAKSGRAWILYPSSS.

The protein belongs to the TrkH potassium transport family. HKT (TC 2.A.38.3) subfamily. Post-translationally, N-glycosylated. Not essential for functional expression and membrane targeting. In terms of tissue distribution, highly expressed in roots. Expressed in flowers, leaves and stems. Expressed in the vascular tissues of every organs. In roots, leaves and flower peduncles, it is only expressed in the phloem tissues. Not expressed in root peripheral cells.

It is found in the cell membrane. The catalysed reaction is Na(+)(in) = Na(+)(out). Its function is as follows. Sodium transporter protein, which plays a central role in plant tolerance to salt. Upon prolongated exposure to high concentrations, Na(+) translocates from the roots to the transpiring leaves where it can increase to toxic level. Involved in Na(+) recirculation from shoots to roots, probably by mediating Na(+) loading into the phloem sap in shoots and unloading in roots, thereby removing large amounts of Na(+) from the shoot. Does not transport K(+) but regulates K(+) nutrient status via its ability to facilitate Na(+) homeostasis. Probably not involved in root uptake of Na(+). The protein is Sodium transporter HKT1 (HKT1) of Arabidopsis thaliana (Mouse-ear cress).